A 201-amino-acid chain; its full sequence is Small ribosomal subunit protein uS4 (201 aa).

The S4 RNA-binding domain occupies 91-154; sequence SRLDNVIYRA…QKMEWFEEAQ (64 aa).

This sequence belongs to the universal ribosomal protein uS4 family. Part of the 30S ribosomal subunit. Contacts protein S5. The interaction surface between S4 and S5 is involved in control of translational fidelity.

In terms of biological role, one of the primary rRNA binding proteins, it binds directly to 16S rRNA where it nucleates assembly of the body of the 30S subunit. Functionally, with S5 and S12 plays an important role in translational accuracy. The protein is Small ribosomal subunit protein uS4 of Corynebacterium aurimucosum (strain ATCC 700975 / DSM 44827 / CIP 107346 / CN-1) (Corynebacterium nigricans).